The chain runs to 1187 residues: uncharacterized protein (1187 aa).

5 disordered regions span residues 302 to 405, 419 to 451, 511 to 551, 1095 to 1134, and 1148 to 1187; these read QKSQ…KPVG, QAFS…RASK, KAPG…LRLE, KSQR…KLPD, and PHLP…PASL. The segment covering 321-333 has biased composition (low complexity); it reads LPLSGPAGAPPLG. Residues 352–361 show a composition bias toward basic residues; it reads SRRKARHKAS. Low complexity-rich tracts occupy residues 422 to 435 and 517 to 534; these read SPLL…SPAA and GTTL…GEPP. Residues 1096–1107 are compositionally biased toward polar residues; it reads SQRTPQGEQSRN. Over residues 1160-1174 the composition is skewed to low complexity; it reads TGGSFSSEGTGSQTS.

This is an uncharacterized protein from Mus musculus (Mouse).